A 4545-amino-acid chain; its full sequence is Prolow-density lipoprotein receptor-related protein 1 (4545 aa).

A signal peptide spans 1-19 (MLTPPLLLLLPLLSALVSG). At 20 to 4424 (ATMDAPKTCS…SQQQPGHMAS (4405 aa)) the chain is on the extracellular side. LDL-receptor class A domains lie at 26-67 (KTCS…ICPQ) and 71-111 (QRCP…HCRE). Disulfide bonds link Cys-28/Cys-41, Cys-35/Cys-54, Cys-48/Cys-65, Cys-73/Cys-86, Cys-80/Cys-99, and Cys-93/Cys-109. The region spanning 112-150 (LRANCSRMGCQHHCVPTPSGPTCYCNSSFQLQADGKTCK) is the EGF-like 1 domain. Asn-115 carries N-linked (GlcNAc...) asparagine glycosylation. Disulfide bonds link Cys-116–Cys-125, Cys-121–Cys-134, Cys-136–Cys-149, Cys-155–Cys-165, Cys-161–Cys-174, and Cys-176–Cys-189. The N-linked (GlcNAc...) asparagine glycan is linked to Asn-137. The EGF-like 2; calcium-binding domain occupies 151-190 (DFDECSVYGTCSQLCTNTDGSFTCGCVEGYLLQPDNRSCK). Residues Asn-186, Asn-240, and Asn-275 are each glycosylated (N-linked (GlcNAc...) asparagine). LDL-receptor class B repeat units follow at residues 293–335 (GNFY…DPAM), 336–379 (GKVF…DLVS), and 380–423 (RLVY…FENY). Asn-358 carries N-linked (GlcNAc...) asparagine glycosylation. Asn-447 carries an N-linked (GlcNAc...) asparagine glycan. The region spanning 475-521 (RSHACENDQYGKPGGCSDICLLANSHKARTCRCRSGFSLGSDGKSCK) is the EGF-like 3 domain. 3 disulfides stabilise this stretch: Cys-479–Cys-494, Cys-490–Cys-505, and Cys-507–Cys-520. LDL-receptor class B repeat units lie at residues 572–614 (GFIY…DWMG), 615–660 (DNLY…DPLN), 661–711 (GWMY…DIPA), and 712–755 (GRLY…HGNY). N-linked (GlcNAc...) asparagine glycosylation occurs at Asn-730. The EGF-like 4 domain occupies 804 to 844 (GTNKCRVNNGGCSSLCLATPGSRQCACAEDQVLDTDGVTCL). Intrachain disulfides connect Cys-808–Cys-819, Cys-815–Cys-828, Cys-830–Cys-843, Cys-855–Cys-867, Cys-862–Cys-880, Cys-874–Cys-891, Cys-896–Cys-908, Cys-903–Cys-921, Cys-915–Cys-932, Cys-937–Cys-949, Cys-944–Cys-962, Cys-956–Cys-972, Cys-977–Cys-990, Cys-985–Cys-1003, Cys-997–Cys-1012, Cys-1016–Cys-1028, Cys-1023–Cys-1041, Cys-1035–Cys-1052, Cys-1063–Cys-1076, Cys-1070–Cys-1089, Cys-1083–Cys-1098, Cys-1105–Cys-1119, Cys-1113–Cys-1132, Cys-1126–Cys-1141, Cys-1146–Cys-1160, Cys-1153–Cys-1173, Cys-1167–Cys-1183, Cys-1186–Cys-1197, Cys-1193–Cys-1207, Cys-1209–Cys-1222, Cys-1228–Cys-1238, Cys-1234–Cys-1247, and Cys-1249–Cys-1262. LDL-receptor class A domains are found at residues 853 to 893 (PQCQ…LCHQ), 894 to 934 (HTCP…TCSA), 935 to 974 (RTCP…SCAY), 975 to 1014 (PTCF…GCSH), 1014 to 1054 (HSCS…NCTN), 1061 to 1100 (GGCH…SCEG), 1103 to 1143 (HVCD…NCEA), and 1144 to 1183 (LACR…GELC). Ca(2+) contacts are provided by Trp-872, Asp-875, Asp-877, Asp-879, Asp-885, and Glu-886. A glycan (N-linked (GlcNAc...) asparagine) is linked at Asn-929. Residues Trp-1033, Asp-1036, Asp-1038, Asp-1040, Asp-1046, and Glu-1047 each contribute to the Ca(2+) site. A glycan (N-linked (GlcNAc...) asparagine) is linked at Asn-1051. Residues Trp-1081, Asp-1084, Asp-1086, Asp-1088, Asp-1094, and Glu-1095 each coordinate Ca(2+). Residues Asn-1155 and Asn-1156 are each glycosylated (N-linked (GlcNAc...) asparagine). EGF-like domains are found at residues 1184 to 1223 (DQCS…HTCQ) and 1224 to 1263 (IQSY…ESCR). N-linked (GlcNAc...) asparagine glycosylation is found at Asn-1196 and Asn-1219. 5 LDL-receptor class B repeats span residues 1310-1356 (SALY…DWIA), 1357-1399 (GNIY…DPRD), 1400-1446 (GILF…DYLE), 1447-1491 (KRIL…YGGE), and 1492-1532 (VYWT…YHPS). N-linked (GlcNAc...) asparagine glycosylation is present at Asn-1512. An EGF-like 7 domain is found at 1537–1580 (APNPCEANGGRGPCSHLCLINYNRTVSCACPHLMKLHKDNTTCY). Cystine bridges form between Cys-1541-Cys-1554, Cys-1550-Cys-1564, and Cys-1566-Cys-1579. Asn-1559, Asn-1576, Asn-1617, and Asn-1646 each carry an N-linked (GlcNAc...) asparagine glycan. 4 LDL-receptor class B repeats span residues 1628-1670 (QRVY…DWVS), 1671-1714 (RNLF…HPLR), 1715-1754 (GKLY…DFPE), and 1755-1799 (SKLY…MGDK). Asn-1724, Asn-1734, Asn-1764, and Asn-1826 each carry an N-linked (GlcNAc...) asparagine glycan. An EGF-like 8 domain is found at 1847-1888 (GTNPCSVNNGDCSQLCLPTSETTRSCMCTAGYSLRSGQQACE). 3 cysteine pairs are disulfide-bonded: Cys-1851–Cys-1862, Cys-1858–Cys-1872, and Cys-1874–Cys-1887. N-linked (GlcNAc...) asparagine glycosylation is present at Asn-1934. LDL-receptor class B repeat units follow at residues 1935 to 1977 (DTIY…DWIA), 1978 to 2020 (GNIY…HPEK), 2021 to 2064 (GYLF…DYQG), and 2065 to 2108 (GKLY…FEDF). Residue Asn-1996 is glycosylated (N-linked (GlcNAc...) asparagine). Residue Lys-2010 is modified to N6-acetyllysine. N-linked (GlcNAc...) asparagine glycosylation is present at Asn-2049. Residues Asn-2118 and Asn-2128 are each glycosylated (N-linked (GlcNAc...) asparagine). The EGF-like 9 domain occupies 2156 to 2196 (GTNVCAVANGGCQQLCLYRGGGQRACACAHGMLAEDGASCR). 3 disulfides stabilise this stretch: Cys-2160–Cys-2171, Cys-2167–Cys-2181, and Cys-2183–Cys-2195. 5 LDL-receptor class B repeats span residues 2254-2295 (NRIF…HRGW), 2296-2344 (DTLY…DECQ), 2345-2389 (NLMF…DHRA), 2390-2432 (EKLY…YGEH), and 2433-2474 (IFWT…VAND). N-linked (GlcNAc...) asparagine glycosylation occurs at Asn-2473. Residues 2479-2519 (ELSPCRINNGGCQDLCLLTHQGHVNCSCRGGRILQEDFTCR) enclose the EGF-like 10 domain. 3 cysteine pairs are disulfide-bonded: Cys-2483–Cys-2494, Cys-2490–Cys-2504, and Cys-2506–Cys-2518. N-linked (GlcNAc...) asparagine glycosylation is present at Asn-2503. Asn-2522 carries an N-linked (GlcNAc...) asparagine glycan. LDL-receptor class A domains lie at 2523-2564 (SSCR…YCNS), 2565-2603 (RRCK…PCNK), 2604-2642 (TACG…NCSA), 2643-2691 (TDCS…DCPG), 2695-2733 (PRCP…HCNK), 2733-2772 (KFCS…HCEG), and 2773-2815 (KTCG…GCLY). 6 disulfides stabilise this stretch: Cys-2525–Cys-2538, Cys-2533–Cys-2551, Cys-2545–Cys-2562, Cys-2567–Cys-2579, Cys-2574–Cys-2592, and Cys-2586–Cys-2601. Asn-2602 carries N-linked (GlcNAc...) asparagine glycosylation. 15 cysteine pairs are disulfide-bonded: Cys-2606–Cys-2618, Cys-2613–Cys-2631, Cys-2625–Cys-2640, Cys-2645–Cys-2667, Cys-2661–Cys-2680, Cys-2674–Cys-2689, Cys-2697–Cys-2709, Cys-2704–Cys-2722, Cys-2716–Cys-2731, Cys-2735–Cys-2747, Cys-2742–Cys-2760, Cys-2754–Cys-2770, Cys-2775–Cys-2788, Cys-2782–Cys-2801, and Cys-2795–Cys-2813. N-linked (GlcNAc...) asparagine glycans are attached at residues Asn-2621 and Asn-2639. Asn-2816 is a glycosylation site (N-linked (GlcNAc...) asparagine). LDL-receptor class A domains follow at residues 2817–2856 (STCD…ECEY), 2857–2900 (PTCG…HCTS), and 2903–2941 (HKCN…RGCH). Intrachain disulfides connect Cys-2819-Cys-2831, Cys-2826-Cys-2844, Cys-2838-Cys-2854, Cys-2859-Cys-2871, Cys-2866-Cys-2885, Cys-2879-Cys-2898, Cys-2905-Cys-2918, Cys-2913-Cys-2931, Cys-2925-Cys-2940, Cys-2945-Cys-2957, Cys-2953-Cys-2966, Cys-2968-Cys-2981, Cys-2987-Cys-2997, Cys-2993-Cys-3006, and Cys-3008-Cys-3022. A glycan (N-linked (GlcNAc...) asparagine) is linked at Asn-2906. Residues 2942–2982 (VNECLSRKLSGCSQDCEDLKIGFKCRCRPGFRLKDDGRTCA) enclose the EGF-like 11 domain. The EGF-like 12; calcium-binding domain maps to 2983 to 3023 (DLDECSTTFPCSQLCINTHGSYKCLCVEGYAPRGGDPHSCK). Asn-3049 and Asn-3090 each carry an N-linked (GlcNAc...) asparagine glycan. LDL-receptor class B repeat units follow at residues 3070-3114 (QMIY…DWVG), 3115-3157 (GNLY…DVQN), 3158-3201 (GYLY…DYVT), 3202-3244 (ERIY…FEDY), and 3245-3285 (VYWT…FHAL). The N-linked (GlcNAc...) asparagine glycan is linked to Asn-3265. One can recognise an EGF-like 13 domain in the interval 3291 to 3332 (PNHPCKVNNGGCSNLCLLSPGGGHKCACPTNFYLGGDGRTCV). 3 cysteine pairs are disulfide-bonded: Cys-3295–Cys-3306, Cys-3302–Cys-3316, and Cys-3318–Cys-3331. LDL-receptor class A domains lie at 3333-3372 (SNCT…DCPE), 3373-3411 (FKCR…NCDI), 3412-3451 (HVCL…DCPE), 3452-3492 (VTCA…NCTQ), 3493-3534 (MTCG…ECDE), 3535-3573 (RTCE…SCTP), 3574-3612 (RPCS…DCTP), 3612-3650 (PRCD…ACGT), 3653-3693 (RTCP…ECAR), 3694-3734 (FICP…DCEP), and 3740-3779 (PHCK…DCSI). Asn-3334 carries N-linked (GlcNAc...) asparagine glycosylation. Intrachain disulfides connect Cys-3335/Cys-3347, Cys-3342/Cys-3360, Cys-3354/Cys-3370, Cys-3375/Cys-3387, Cys-3382/Cys-3400, Cys-3394/Cys-3409, Cys-3414/Cys-3427, Cys-3421/Cys-3440, Cys-3434/Cys-3449, Cys-3454/Cys-3467, Cys-3461/Cys-3480, Cys-3474/Cys-3490, Cys-3495/Cys-3508, Cys-3502/Cys-3521, Cys-3515/Cys-3532, Cys-3537/Cys-3549, Cys-3544/Cys-3562, Cys-3556/Cys-3571, Cys-3576/Cys-3588, Cys-3583/Cys-3601, Cys-3595/Cys-3610, Cys-3614/Cys-3626, Cys-3621/Cys-3639, Cys-3633/Cys-3648, Cys-3655/Cys-3667, Cys-3662/Cys-3680, Cys-3674/Cys-3691, Cys-3696/Cys-3710, Cys-3704/Cys-3723, Cys-3717/Cys-3732, Cys-3742/Cys-3755, Cys-3750/Cys-3768, Cys-3762/Cys-3777, Cys-3786/Cys-3799, Cys-3793/Cys-3808, Cys-3810/Cys-3823, Cys-3829/Cys-3839, Cys-3835/Cys-3848, and Cys-3850/Cys-3861. Asn-3489 carries N-linked (GlcNAc...) asparagine glycosylation. Residue Asn-3663 is glycosylated (N-linked (GlcNAc...) asparagine). EGF-like domains are found at residues 3782–3824 (KLTS…PGCQ) and 3825–3862 (DINE…NTCK). Asn-3789 carries an N-linked (GlcNAc...) asparagine glycan. N-linked (GlcNAc...) asparagine glycosylation is present at Asn-3840. LDL-receptor class B repeat units follow at residues 3913 to 3955 (GRVY…HLNI), 3971 to 4013 (GNVY…DPLR), 4014 to 4057 (GTMY…DYHN), and 4058 to 4102 (ERLY…FEDY). Positions 3941–3944 (RHRR) match the Recognition site for proteolytical processing motif. The N-linked (GlcNAc...) asparagine glycan is linked to Asn-3954. Asn-4076 and Asn-4126 each carry an N-linked (GlcNAc...) asparagine glycan. EGF-like domains lie at 4148–4184 (VTNP…GTCV), 4197–4233 (RPGT…DKCE), 4233–4269 (ELDQ…PKCT), 4269–4305 (TAQV…DRCQ), 4305–4341 (QYRQ…PRCE), 4341–4376 (EVNK…PSCL), and 4374–4410 (SCLT…PRCE). 17 cysteine pairs are disulfide-bonded: Cys-4152–Cys-4161, Cys-4157–Cys-4170, Cys-4172–Cys-4183, Cys-4201–Cys-4211, Cys-4205–Cys-4221, Cys-4223–Cys-4232, Cys-4237–Cys-4247, Cys-4241–Cys-4257, Cys-4259–Cys-4268, Cys-4273–Cys-4283, Cys-4277–Cys-4293, Cys-4295–Cys-4304, Cys-4309–Cys-4319, Cys-4313–Cys-4329, Cys-4331–Cys-4340, Cys-4345–Cys-4353, and Cys-4348–Cys-4364. Asn-4180 carries N-linked (GlcNAc...) asparagine glycosylation. 2 N-linked (GlcNAc...) asparagine glycosylation sites follow: Asn-4279 and Asn-4280. N-linked (GlcNAc...) asparagine glycosylation is present at Asn-4365. 4 cysteine pairs are disulfide-bonded: Cys-4366/Cys-4375, Cys-4378/Cys-4388, Cys-4382/Cys-4398, and Cys-4400/Cys-4409. The helical transmembrane segment at 4425–4445 (ILIPLLLLLLLLLVAGVVFWY) threads the bilayer. Residues 4446–4545 (KRRVRGAKGF…PEDEIGDPLA (100 aa)) lie on the Cytoplasmic side of the membrane. Residues 4446-4545 (KRRVRGAKGF…PEDEIGDPLA (100 aa)) form an interaction with MAFB region. At Thr-4461 the chain carries Phosphothreonine. Residues 4503-4508 (FTNPVY) carry the NPXY motif motif. The residue at position 4508 (Tyr-4508) is a Phosphotyrosine. A phosphoserine mark is found at Ser-4518, Ser-4521, and Ser-4524.

The protein belongs to the LDLR family. As to quaternary structure, heterodimer of an 85-kDa membrane-bound carboxyl subunit and a non-covalently attached 515-kDa N-terminal subunit. Intracellular domain interacts with MAFB. Found in a complex with PID1/PCLI1, LRP1 and CUBNI. Interacts with SNX17, PID1/PCLI1, PDGF and CUBN. The intracellular domain interacts with SHC1, GULP1 and DAB1. Can weakly interact (via NPXY motif) with DAB2 (via PID domain); the interaction is enhanced by tyrosine phosphorylation of the NPXY motif. Interacts with MDK; promotes neuronal survival. Interacts with LRPAP1; this interaction is followed by rapid internalization. Interacts with uPA/PLAU and PAI1/SERPINE1, either individually or in complex with each other, leading to rapid endocytosis; this interaction is abolished in the presence of LRPAP1/RAP. Also interacts with tPA/PLAT alone or in complex with SERPINE1. Interacts with the urokinase receptor PLAUR; this interaction leads to PLAUR internalization and is impaired in the presence of SORL1. Interacts with PDGFB. Interacts with TAU/MAPT, leading to endocytosis; this interaction is reduced in the presence of LRPAP1/RAP. Interacts with IGFBP3. Interacts with ADGRG6. Post-translationally, phosphorylated on serine and threonine residues. Phosphorylated on tyrosine residues upon stimulation with PDGF. Tyrosine phosphorylation promotes interaction with SHC1. In terms of processing, cleaved into a 85 kDa membrane-spanning subunit (LRP-85) and a 515 kDa large extracellular domain (LRP-515) that remains non-covalently associated. Gamma-secretase-dependent cleavage of LRP-85 releases the intracellular domain from the membrane.

The protein localises to the cell membrane. Its subcellular location is the membrane. It localises to the coated pit. It is found in the golgi outpost. The protein resides in the cytoplasm. The protein localises to the cytoskeleton. Its subcellular location is the microtubule organizing center. It localises to the nucleus. In terms of biological role, endocytic receptor involved in endocytosis and in phagocytosis of apoptotic cells. Required for early embryonic development. Involved in cellular lipid homeostasis. Involved in the plasma clearance of chylomicron remnants and activated LRPAP1 (alpha 2-macroglobulin), as well as the local metabolism of complexes between plasminogen activators and their endogenous inhibitors. Acts as an alpha-2-macroglobulin receptor. Acts as a TAU/MAPT receptor and controls the endocytosis of TAU/MAPT as well as its subsequent spread. May modulate cellular events, such as APP metabolism, kinase-dependent intracellular signaling, neuronal calcium signaling as well as neurotransmission. Also acts as a receptor for IGFBP3 to mediate cell growth inhibition. Its function is as follows. (Microbial infection) Functions as a receptor for Vibrio cholerae cholix toxin and for Pseudomonas aeruginosa exotoxin A. The chain is Prolow-density lipoprotein receptor-related protein 1 from Mus musculus (Mouse).